The primary structure comprises 491 residues: Argininosuccinate lyase (491 aa).

Belongs to the lyase 1 family. Argininosuccinate lyase subfamily.

The protein localises to the cytoplasm. The enzyme catalyses 2-(N(omega)-L-arginino)succinate = fumarate + L-arginine. The protein operates within amino-acid biosynthesis; L-arginine biosynthesis; L-arginine from L-ornithine and carbamoyl phosphate: step 3/3. The chain is Argininosuccinate lyase from Methanosarcina mazei (strain ATCC BAA-159 / DSM 3647 / Goe1 / Go1 / JCM 11833 / OCM 88) (Methanosarcina frisia).